Consider the following 303-residue polypeptide: N-acetyl-D-glucosamine kinase (303 aa).

ATP is bound by residues 4–11 (GFDIGGTK) and 133–140 (GVGGGLIF). The Zn(2+) site is built by His-157, Cys-177, Cys-179, and Cys-184.

This sequence belongs to the ROK (NagC/XylR) family. NagK subfamily.

The catalysed reaction is N-acetyl-D-glucosamine + ATP = N-acetyl-D-glucosamine 6-phosphate + ADP + H(+). It functions in the pathway cell wall biogenesis; peptidoglycan recycling. Its function is as follows. Catalyzes the phosphorylation of N-acetyl-D-glucosamine (GlcNAc) derived from cell-wall degradation, yielding GlcNAc-6-P. This is N-acetyl-D-glucosamine kinase from Escherichia coli O139:H28 (strain E24377A / ETEC).